We begin with the raw amino-acid sequence, 61 residues long: Large ribosomal subunit protein bL28 (61 aa).

Belongs to the bacterial ribosomal protein bL28 family.

This is Large ribosomal subunit protein bL28 from Geobacillus kaustophilus (strain HTA426).